The chain runs to 460 residues: GTPase Der (460 aa).

2 EngA-type G domains span residues 2 to 166 (KTIA…AEER) and 175 to 353 (TRIA…QERK). GTP contacts are provided by residues 8 to 15 (GRPNVGKS), 55 to 59 (DTGGL), 118 to 121 (NKLD), 181 to 188 (GQPNAGKS), 228 to 232 (DTAGL), and 293 to 296 (NKID). A KH-like domain is found at 354-446 (KRIPTHRLTQ…LLWKWRKAEG (93 aa)).

Belongs to the TRAFAC class TrmE-Era-EngA-EngB-Septin-like GTPase superfamily. EngA (Der) GTPase family. Associates with the 50S ribosomal subunit.

Its function is as follows. GTPase that plays an essential role in the late steps of ribosome biogenesis. This Methylacidiphilum infernorum (isolate V4) (Methylokorus infernorum (strain V4)) protein is GTPase Der.